We begin with the raw amino-acid sequence, 99 residues long: Carboxysome shell vertex protein CcmL (99 aa).

Residues 1–83 (MKIARVCGTV…IDAAVVAIID (83 aa)) form the BMV domain.

Belongs to the CcmL/EutN family. CcmL subfamily. Homopentamer. May interact with CcmK2, this occurs at very high CcmK2 concentrations. Interacts with full-length CcmM.

The protein localises to the carboxysome. Probably forms vertices in the carboxysome, a polyhedral inclusion where RuBisCO (ribulose bisphosphate carboxylase, rbcL-rbcS) is sequestered. Has been modeled to induce curvature upon insertion into an otherwise flat hexagonal molecular layer of CcmK subunits. This chain is Carboxysome shell vertex protein CcmL, found in Thermosynechococcus vestitus (strain NIES-2133 / IAM M-273 / BP-1).